The following is a 368-amino-acid chain: Phosphoribosylaminoimidazole-succinocarboxamide synthase (368 aa).

Belongs to the SAICAR synthetase family.

The catalysed reaction is 5-amino-1-(5-phospho-D-ribosyl)imidazole-4-carboxylate + L-aspartate + ATP = (2S)-2-[5-amino-1-(5-phospho-beta-D-ribosyl)imidazole-4-carboxamido]succinate + ADP + phosphate + 2 H(+). Its pathway is purine metabolism; IMP biosynthesis via de novo pathway; 5-amino-1-(5-phospho-D-ribosyl)imidazole-4-carboxamide from 5-amino-1-(5-phospho-D-ribosyl)imidazole-4-carboxylate: step 1/2. The polypeptide is Phosphoribosylaminoimidazole-succinocarboxamide synthase (Vibrio cholerae serotype O1 (strain ATCC 39315 / El Tor Inaba N16961)).